The primary structure comprises 256 residues: Endonuclease NucS (256 aa).

The disordered stretch occupies residues 62–97 (AAKSAQHSRESVAGGAVDGDSATHSPESVAAGEPEK).

This sequence belongs to the NucS endonuclease family.

It is found in the cytoplasm. Its function is as follows. Cleaves both 3' and 5' ssDNA extremities of branched DNA structures. The sequence is that of Endonuclease NucS from Bifidobacterium longum (strain NCC 2705).